Reading from the N-terminus, the 475-residue chain is ATP synthase subunit beta, chloroplastic (475 aa).

An ATP-binding site is contributed by 156-163 (GGAGVGKT).

This sequence belongs to the ATPase alpha/beta chains family. F-type ATPases have 2 components, CF(1) - the catalytic core - and CF(0) - the membrane proton channel. CF(1) has five subunits: alpha(3), beta(3), gamma(1), delta(1), epsilon(1). CF(0) has four main subunits: a(1), b(1), b'(1) and c(9-12).

It is found in the plastid. The protein resides in the chloroplast thylakoid membrane. It catalyses the reaction ATP + H2O + 4 H(+)(in) = ADP + phosphate + 5 H(+)(out). Its function is as follows. Produces ATP from ADP in the presence of a proton gradient across the membrane. The catalytic sites are hosted primarily by the beta subunits. This Phaeodactylum tricornutum (strain CCAP 1055/1) protein is ATP synthase subunit beta, chloroplastic.